A 417-amino-acid chain; its full sequence is Dibenzothiophene monooxygenase (417 aa).

A helical N-terminus region spans residues 19–125 (DPVAVARGLA…LYTQIAQNNW (107 aa)). FMN-binding positions include Tyr96, 129-134 (NASSEN), 159-163 (KHFCS), Arg282, 369-370 (AR), and His391. The central beta-barrel N-terminus stretch occupies residues 126–234 (WTGNASSENN…VEPDEVLGAP (109 aa)). The segment at 131–142 (SSENNSHELDVK) is lid loop. Residues 235–409 (NAFVLAFIQS…DVGKHTLNGQ (175 aa)) form a helical C-terminus region.

It belongs to the DszC flavin monooxygenase family. In terms of assembly, homotetramer.

The protein resides in the cytoplasm. The catalysed reaction is dibenzothiophene + 2 FMNH2 + 2 O2 = dibenzothiophene 5,5-dioxide + 2 FMN + 2 H2O + 2 H(+). It carries out the reaction dibenzothiophene + FMNH2 + O2 = dibenzothiophene 5-oxide + FMN + H2O + H(+). It catalyses the reaction dibenzothiophene 5-oxide + FMNH2 + O2 = dibenzothiophene 5,5-dioxide + FMN + H2O + H(+). The protein operates within sulfur metabolism; dibenzothiophene degradation. Functionally, catalyzes the first step of the '4S' desulfurization pathway that removes covalently bound sulfur from dibenzothiophene (DBT) without breaking carbon-carbon bonds. Sulfur dioxygenase which converts DBT to DBT-sulfone (DBTO2 or DBT 5,5-dioxide) in a stepwise manner. The protein is Dibenzothiophene monooxygenase of Rhodococcus erythropolis (Arthrobacter picolinophilus).